A 169-amino-acid chain; its full sequence is 6,7-dimethyl-8-ribityllumazine synthase (169 aa).

Residues Phe24, 58–60, and 82–84 each bind 5-amino-6-(D-ribitylamino)uracil; these read ALE and AVI. 87-88 provides a ligand contact to (2S)-2-hydroxy-3-oxobutyl phosphate; that stretch reads ET. His90 acts as the Proton donor in catalysis. Asn115 is a 5-amino-6-(D-ribitylamino)uracil binding site. Position 129 (Arg129) interacts with (2S)-2-hydroxy-3-oxobutyl phosphate.

The protein belongs to the DMRL synthase family.

It carries out the reaction (2S)-2-hydroxy-3-oxobutyl phosphate + 5-amino-6-(D-ribitylamino)uracil = 6,7-dimethyl-8-(1-D-ribityl)lumazine + phosphate + 2 H2O + H(+). Its pathway is cofactor biosynthesis; riboflavin biosynthesis; riboflavin from 2-hydroxy-3-oxobutyl phosphate and 5-amino-6-(D-ribitylamino)uracil: step 1/2. Functionally, catalyzes the formation of 6,7-dimethyl-8-ribityllumazine by condensation of 5-amino-6-(D-ribitylamino)uracil with 3,4-dihydroxy-2-butanone 4-phosphate. This is the penultimate step in the biosynthesis of riboflavin. The protein is 6,7-dimethyl-8-ribityllumazine synthase of Burkholderia vietnamiensis (strain G4 / LMG 22486) (Burkholderia cepacia (strain R1808)).